We begin with the raw amino-acid sequence, 245 residues long: Farnesol dehydrogenase (245 aa).

Residues 11-40 and Asp-64 contribute to the NAD(+) site; that span reads VTGA…ARRV. Residue Ser-145 participates in substrate binding. The Proton acceptor role is filled by Tyr-160. Position 164 (Lys-164) interacts with NAD(+).

It belongs to the short-chain dehydrogenases/reductases (SDR) family. Homodimer. In terms of tissue distribution, highly expressed level in the midgut and brain in adult females, and at lower level in the abdominal and thoracic ganglia. High levels are detected in corpora allata (CA), Malpighian tubules and fat body.

It carries out the reaction (2E,6E)-farnesol + NADP(+) = (2E,6E)-farnesal + NADPH + H(+). Functionally, mediates oxidation of farnesol into farnesal, a precursor of juvenile hormone in the corpora allata (CA), the glands that synthesize juvenile hormone. Able to oxidize C(10) to C(15) isoprenoid and aliphatic alcohols. This Aedes aegypti (Yellowfever mosquito) protein is Farnesol dehydrogenase.